The primary structure comprises 273 residues: Formamidopyrimidine-DNA glycosylase (273 aa).

Catalysis depends on P2, which acts as the Schiff-base intermediate with DNA. The Proton donor role is filled by E3. The Proton donor; for beta-elimination activity role is filled by K58. DNA is bound by residues H91, R110, and R153. The FPG-type zinc finger occupies K238–K272. Catalysis depends on R262, which acts as the Proton donor; for delta-elimination activity.

It belongs to the FPG family. Monomer. It depends on Zn(2+) as a cofactor.

It carries out the reaction Hydrolysis of DNA containing ring-opened 7-methylguanine residues, releasing 2,6-diamino-4-hydroxy-5-(N-methyl)formamidopyrimidine.. It catalyses the reaction 2'-deoxyribonucleotide-(2'-deoxyribose 5'-phosphate)-2'-deoxyribonucleotide-DNA = a 3'-end 2'-deoxyribonucleotide-(2,3-dehydro-2,3-deoxyribose 5'-phosphate)-DNA + a 5'-end 5'-phospho-2'-deoxyribonucleoside-DNA + H(+). In terms of biological role, involved in base excision repair of DNA damaged by oxidation or by mutagenic agents. Acts as a DNA glycosylase that recognizes and removes damaged bases. Has a preference for oxidized purines, such as 7,8-dihydro-8-oxoguanine (8-oxoG). Has AP (apurinic/apyrimidinic) lyase activity and introduces nicks in the DNA strand. Cleaves the DNA backbone by beta-delta elimination to generate a single-strand break at the site of the removed base with both 3'- and 5'-phosphates. The protein is Formamidopyrimidine-DNA glycosylase of Lactobacillus delbrueckii subsp. bulgaricus (strain ATCC 11842 / DSM 20081 / BCRC 10696 / JCM 1002 / NBRC 13953 / NCIMB 11778 / NCTC 12712 / WDCM 00102 / Lb 14).